Reading from the N-terminus, the 177-residue chain is Interleukin-1 receptor antagonist protein (177 aa).

The first 25 residues, 1–25 (MEIRRRSVRHLISLLLFLFYSETAC), serve as a signal peptide directing secretion. The cysteines at positions 91 and 141 are disulfide-linked. Residue Asn109 is glycosylated (N-linked (GlcNAc...) asparagine).

The protein belongs to the IL-1 family.

The protein localises to the secreted. Its function is as follows. Anti-inflammatory antagonist of interleukin-1 family of proinflammatory cytokines such as interleukin-1beta/IL1B and interleukin-1alpha/IL1A. Protects from immune dysregulation and uncontrolled systemic inflammation triggered by IL1 for a range of innate stimulatory agents such as pathogens. This is Interleukin-1 receptor antagonist protein (IL1RN) from Equus caballus (Horse).